The primary structure comprises 84 residues: Small ribosomal subunit protein uS17 (84 aa).

Belongs to the universal ribosomal protein uS17 family. As to quaternary structure, part of the 30S ribosomal subunit.

In terms of biological role, one of the primary rRNA binding proteins, it binds specifically to the 5'-end of 16S ribosomal RNA. In Ureaplasma parvum serovar 3 (strain ATCC 27815 / 27 / NCTC 11736), this protein is Small ribosomal subunit protein uS17.